The sequence spans 175 residues: Small ribosomal subunit protein uS4 (175 aa).

An S4 RNA-binding domain is found at 105-169 (RRLQTIVYRQ…SPLADSLHPA (65 aa)).

It belongs to the universal ribosomal protein uS4 family. As to quaternary structure, part of the 30S ribosomal subunit. Contacts protein S5. The interaction surface between S4 and S5 is involved in control of translational fidelity.

Functionally, one of the primary rRNA binding proteins, it binds directly to 16S rRNA where it nucleates assembly of the body of the 30S subunit. Its function is as follows. With S5 and S12 plays an important role in translational accuracy. This is Small ribosomal subunit protein uS4 from Haloquadratum walsbyi (strain DSM 16790 / HBSQ001).